Here is a 70-residue protein sequence, read N- to C-terminus: DNA-directed RNA polymerase subunit epsilon (70 aa).

This sequence belongs to the RNA polymerase subunit epsilon family. As to quaternary structure, RNAP is composed of a core of 2 alpha, a beta and a beta' subunit. The core is associated with a delta subunit, and at least one of epsilon or omega. When a sigma factor is associated with the core the holoenzyme is formed, which can initiate transcription.

It catalyses the reaction RNA(n) + a ribonucleoside 5'-triphosphate = RNA(n+1) + diphosphate. In terms of biological role, a non-essential component of RNA polymerase (RNAP). The protein is DNA-directed RNA polymerase subunit epsilon of Bacillus mycoides (strain KBAB4) (Bacillus weihenstephanensis).